The sequence spans 308 residues: Hydroxyacylglutathione hydrolase, mitochondrial (308 aa).

A mitochondrion-targeting transit peptide spans 1-13 (MVLGRGLLGRRSL). Residues H102, H104, D106, and H107 each contribute to the Zn(2+) site. K116 carries the post-translational modification N6-acetyllysine. Residues H158 and D182 each coordinate Zn(2+). Residues 191 to 193 (KFY) and 221 to 223 (HEY) each bind substrate. H221 is a Zn(2+) binding site. K229 carries the N6-acetyllysine; alternate modification. An N6-succinyllysine; alternate modification is found at K229. 297–300 (RKEK) contributes to the substrate binding site.

Belongs to the metallo-beta-lactamase superfamily. Glyoxalase II family. In terms of assembly, monomer. The cofactor is Zn(2+). In terms of tissue distribution, testis.

The protein resides in the mitochondrion matrix. It localises to the cytoplasm. It carries out the reaction an S-(2-hydroxyacyl)glutathione + H2O = a 2-hydroxy carboxylate + glutathione + H(+). It catalyses the reaction (R)-S-lactoylglutathione + H2O = (R)-lactate + glutathione + H(+). Its pathway is secondary metabolite metabolism; methylglyoxal degradation; (R)-lactate from methylglyoxal: step 2/2. Functionally, thiolesterase that catalyzes the hydrolysis of S-D-lactoyl-glutathione to form glutathione and D-lactic acid. This is Hydroxyacylglutathione hydrolase, mitochondrial (HAGH) from Macaca fascicularis (Crab-eating macaque).